Reading from the N-terminus, the 502-residue chain is Probable cytochrome P450 554A1 (502 aa).

A helical membrane pass occupies residues 3–20 (LLLFIFFLILFYYSVKYY). Position 448 (Cys-448) interacts with heme.

This sequence belongs to the cytochrome P450 family. Heme is required as a cofactor.

It is found in the membrane. In Dictyostelium discoideum (Social amoeba), this protein is Probable cytochrome P450 554A1 (cyp554A1).